Reading from the N-terminus, the 508-residue chain is Maturase K (508 aa).

The protein belongs to the intron maturase 2 family. MatK subfamily.

The protein localises to the plastid. The protein resides in the chloroplast. Its function is as follows. Usually encoded in the trnK tRNA gene intron. Probably assists in splicing its own and other chloroplast group II introns. In Amburana cearensis (Cerejeira), this protein is Maturase K.